A 197-amino-acid polypeptide reads, in one-letter code: ATP-dependent Clp protease proteolytic subunit 2 (197 aa).

The Nucleophile role is filled by serine 97. Residue histidine 122 is part of the active site.

Belongs to the peptidase S14 family. Fourteen ClpP subunits assemble into 2 heptameric rings which stack back to back to give a disk-like structure with a central cavity, resembling the structure of eukaryotic proteasomes.

It localises to the cytoplasm. It catalyses the reaction Hydrolysis of proteins to small peptides in the presence of ATP and magnesium. alpha-casein is the usual test substrate. In the absence of ATP, only oligopeptides shorter than five residues are hydrolyzed (such as succinyl-Leu-Tyr-|-NHMec, and Leu-Tyr-Leu-|-Tyr-Trp, in which cleavage of the -Tyr-|-Leu- and -Tyr-|-Trp bonds also occurs).. In terms of biological role, cleaves peptides in various proteins in a process that requires ATP hydrolysis. Has a chymotrypsin-like activity. Plays a major role in the degradation of misfolded proteins. The protein is ATP-dependent Clp protease proteolytic subunit 2 of Leptospira interrogans serogroup Icterohaemorrhagiae serovar copenhageni (strain Fiocruz L1-130).